The following is a 509-amino-acid chain: Proton-gated ion channel subunit pbo-5 (509 aa).

The N-terminal stretch at 1-21 is a signal peptide; the sequence is MTRLSILQHLLTFLILSKINA. Residues 22 to 275 lie on the Extracellular side of the membrane; sequence TSTTESYFDS…ISLKRRPLFY (254 aa). A disulfide bridge connects residues cysteine 193 and cysteine 207. 3 consecutive transmembrane segments (helical) span residues 276 to 296, 310 to 330, and 336 to 356; these read MVTLTFPSYIMCAISVVGLFA, LGVTAILTMAVLSLVVSEKVP, and VPLLVAYFLFNMVIVSIAAMT. Over 357-487 the chain is Cytoplasmic; that stretch reads TGIVMKVHRL…GYVRISERLD (131 aa). A helical membrane pass occupies residues 488-508; sequence ILFMFLFLSTVTIPVAVLFYL.

Belongs to the ligand-gated ion channel (TC 1.A.9) family. Acetylcholine receptor (TC 1.A.9.1) subfamily. The functional channel is a heterooligomer of pbo-5 and pbo-6. May self-associate to form homooligomers with negligible ion channel activity. In terms of tissue distribution, expressed in the posterior body muscles. Also detected in the RIFL, RIFR and RIS head neurons.

The protein resides in the membrane. Forms a proton-gated ion channel with pbo-6 that is activated by acidification of the posterior coelomic space, leading to posterior body wall muscle contraction (pBoc) during the defecation cycle. Probably by regulating the defecation motor program, required for fatty acid uptake by intestinal cells. Does not bind neurotransmitters such as acetylcholine, gamma-aminobutyric acid, glycine, serotonin, glutamate or choline. The sequence is that of Proton-gated ion channel subunit pbo-5 from Caenorhabditis elegans.